A 497-amino-acid polypeptide reads, in one-letter code: mRNA cleavage and polyadenylation factor CLP1 (497 aa).

Residues E34, K73, and 157–162 (HSGKTS) each bind ATP.

It belongs to the Clp1 family. Clp1 subfamily. As to quaternary structure, component of a pre-mRNA cleavage factor complex. Interacts directly with PCF11.

The protein resides in the nucleus. Its function is as follows. Required for endonucleolytic cleavage during polyadenylation-dependent pre-mRNA 3'-end formation. The protein is mRNA cleavage and polyadenylation factor CLP1 of Debaryomyces hansenii (strain ATCC 36239 / CBS 767 / BCRC 21394 / JCM 1990 / NBRC 0083 / IGC 2968) (Yeast).